A 307-amino-acid chain; its full sequence is MSGFGAAALLSGSSAAAGTRSGSSDSLEKIDMSLDDIIKLNKKEERKQYSPKMKRGLQQNRTQQFRTPGSKWGIQQQKGYGKNHLGHRKKIVGKKRPYGVITGLAAKKAMGSHKGISPLNRQPLSEKNTQRNYPILKKKPNLQRQTEMQRKQIPALRRPAPLSRRIGNKLNQQKDTRQATFLFRRGLKVQAQVQPTEDLDNQAAKRTRQWRTSTTSGGILTVSIENPGAIITPISQKLRLTRTPVPPFLMKKDQSEEKKIPKGVPLQFDINSVGKQTGMTLNERFGILKEQRTALSQNKGSRFVTVG.

Residues 1–25 (MSGFGAAALLSGSSAAAGTRSGSSD) show a composition bias toward low complexity. 2 disordered regions span residues 1-28 (MSGF…DSLE) and 41-85 (NKKE…KNHL). The UAP56-binding motif signature appears at 26-44 (SLEKIDMSLDDIIKLNKKE). A compositionally biased stretch (polar residues) spans 57 to 78 (LQQNRTQQFRTPGSKWGIQQQK).

The protein belongs to the UIF family. As to expression, widely expressed.

It localises to the nucleus. The protein resides in the nucleoplasm. The protein localises to the nucleus speckle. Its function is as follows. Required for mRNA export from the nucleus to the cytoplasm. Acts as an adapter that uses the DDX39B/UAP56-NFX1 pathway to ensure efficient mRNA export and delivering to the nuclear pore. In Gallus gallus (Chicken), this protein is UAP56-interacting factor (FYTTD1).